The following is a 165-amino-acid chain: uncharacterized protein (165 aa).

The tract at residues Gln49–Lys165 is disordered. The span at Met94–Ser106 shows a compositional bias: polar residues. The span at Thr120–Pro135 shows a compositional bias: low complexity. The segment covering Ser139–Ala157 has biased composition (polar residues).

This is an uncharacterized protein from Caenorhabditis elegans.